The following is a 258-amino-acid chain: tRNA pseudouridine synthase A (258 aa).

The Nucleophile role is filled by Asp61. Tyr119 lines the substrate pocket.

It belongs to the tRNA pseudouridine synthase TruA family. In terms of assembly, homodimer.

It carries out the reaction uridine(38/39/40) in tRNA = pseudouridine(38/39/40) in tRNA. Functionally, formation of pseudouridine at positions 38, 39 and 40 in the anticodon stem and loop of transfer RNAs. This chain is tRNA pseudouridine synthase A, found in Chlorobium phaeobacteroides (strain DSM 266 / SMG 266 / 2430).